The primary structure comprises 271 residues: 3-methyl-2-oxobutanoate hydroxymethyltransferase (271 aa).

Mg(2+) is bound by residues Asp51 and Asp90. 3-methyl-2-oxobutanoate is bound by residues 51 to 52, Asp90, and Lys118; that span reads DS. Glu120 serves as a coordination point for Mg(2+). Glu186 (proton acceptor) is an active-site residue.

It belongs to the PanB family. In terms of assembly, homodecamer; pentamer of dimers. The cofactor is Mg(2+).

The protein localises to the cytoplasm. The enzyme catalyses 3-methyl-2-oxobutanoate + (6R)-5,10-methylene-5,6,7,8-tetrahydrofolate + H2O = 2-dehydropantoate + (6S)-5,6,7,8-tetrahydrofolate. It participates in cofactor biosynthesis; (R)-pantothenate biosynthesis; (R)-pantoate from 3-methyl-2-oxobutanoate: step 1/2. Its function is as follows. Catalyzes the reversible reaction in which hydroxymethyl group from 5,10-methylenetetrahydrofolate is transferred onto alpha-ketoisovalerate to form ketopantoate. This chain is 3-methyl-2-oxobutanoate hydroxymethyltransferase, found in Xanthomonas campestris pv. campestris (strain B100).